The chain runs to 82 residues: Acyl carrier protein (82 aa).

The 76-residue stretch at 2–77 folds into the Carrier domain; that stretch reads DNVADRVKKV…QAIDYVSAHI (76 aa). Position 37 is an O-(pantetheine 4'-phosphoryl)serine (S37).

Belongs to the acyl carrier protein (ACP) family. 4'-phosphopantetheine is transferred from CoA to a specific serine of apo-ACP by AcpS. This modification is essential for activity because fatty acids are bound in thioester linkage to the sulfhydryl of the prosthetic group.

The protein resides in the cytoplasm. It functions in the pathway lipid metabolism; fatty acid biosynthesis. Carrier of the growing fatty acid chain in fatty acid biosynthesis. This is Acyl carrier protein from Acidithiobacillus ferrooxidans (strain ATCC 23270 / DSM 14882 / CIP 104768 / NCIMB 8455) (Ferrobacillus ferrooxidans (strain ATCC 23270)).